A 233-amino-acid chain; its full sequence is MTSLPGGIYDGDLGDQPMSGLVPMVVEQTTRGERAYDIFSRLLKERIVFIGTPINDQIANLTVAQLLYLASESSEKPINLYINSPGGVIYSGLGVYDTMQYIGAPVSTICVGLAASMGSVLLAAGEDDSRACLPNSRVMIHQPMGGAEGQASDIEIQAEEIMWLKERLYEILALHTGQDIDQIEADADRNYWMSAEEAEEYGLVDNVLNPDNLEGLKSIQPNGEAADDSEDDA.

S116 (nucleophile) is an active-site residue. The active site involves H141. The interval 214 to 233 is disordered; sequence EGLKSIQPNGEAADDSEDDA.

The protein belongs to the peptidase S14 family. In terms of assembly, fourteen ClpP subunits assemble into 2 heptameric rings which stack back to back to give a disk-like structure with a central cavity, resembling the structure of eukaryotic proteasomes.

The protein localises to the cytoplasm. It carries out the reaction Hydrolysis of proteins to small peptides in the presence of ATP and magnesium. alpha-casein is the usual test substrate. In the absence of ATP, only oligopeptides shorter than five residues are hydrolyzed (such as succinyl-Leu-Tyr-|-NHMec, and Leu-Tyr-Leu-|-Tyr-Trp, in which cleavage of the -Tyr-|-Leu- and -Tyr-|-Trp bonds also occurs).. Its function is as follows. Cleaves peptides in various proteins in a process that requires ATP hydrolysis. Has a chymotrypsin-like activity. Plays a major role in the degradation of misfolded proteins. This Salinibacter ruber (strain DSM 13855 / M31) protein is ATP-dependent Clp protease proteolytic subunit 2.